Reading from the N-terminus, the 252-residue chain is Transcriptional regulatory protein HptR (252 aa).

Residues 3 to 118 (KVVICDDERI…QLEVILGRLV (116 aa)) enclose the Response regulatory domain. D55 is modified (4-aspartylphosphate). In terms of domain architecture, HTH araC/xylS-type spans 153-250 (NQIVDQIKQS…QMAPSDYCKQ (98 aa)). 2 DNA-binding regions (H-T-H motif) span residues 170 to 191 (SDLIQHIDVSESYAMRTFKDHV) and 217 to 240 (HYEIADKVGFSEYKMFSYHFKKYL).

Post-translationally, phosphorylated by HptS.

The protein localises to the cytoplasm. In terms of biological role, member of the two-component regulatory system HptS/HptR that regulates genes involved in hexose phosphate transport system in response to changes in extracellular phosphate sources. Activates uhpT expression to facilitate glucose-6-phosphate/G6P utilization by directly binding to its promoter. Antagonizes CcpA-dependent transcription of a subset of CcpA-regulated genes involved in antibiotic susceptibility. The protein is Transcriptional regulatory protein HptR (hptR) of Staphylococcus aureus (strain bovine RF122 / ET3-1).